A 54-amino-acid polypeptide reads, in one-letter code: Apelin receptor early endogenous ligand (54 aa).

The first 22 residues, 1-22, serve as a signal peptide directing secretion; that stretch reads MRFQQFLFAFFIFIMSLLLISG. N-linked (GlcNAc...) asparagine glycosylation is present at asparagine 27.

The protein belongs to the Elabela/Toddler family. Interacts with APLNR. As to expression, expressed in the intima of blood vessels. Expressed in endothelial cells in blood vessels in the heart and lung. Expressed in cytotrophoblasts and syncytiotrophoblasts of first-trimester placental tissue and term placentas (at protein level). Not detected in smooth muscle cells or cardiomyocytes (at protein level). Expressed in kidney. Expressed in blood vessels. Expressed in embryonic (ESCs) and induced (iPSCs) pluripotent stem cells. Most highly expressed in undifferentiated embryonic stem cell and is rapidly down-regulated during differentiation.

The protein resides in the secreted. It localises to the extracellular space. Its function is as follows. Peptide hormone that functions as endogenous ligand for the G-protein-coupled apelin receptor (APLNR/APJ), that plays a role in the regulation of normal cardiovascular function and fluid homeostasis. Functions as a balanced agonist activating both G(i) protein pathway and beta-arrestin pathway of APLNR. Downstream G proteins activation, apelin can inhibit cAMP production and activate key intracellular effectors such as ERKs. On the other hand, APLNR activation induces beta-arrestin recruitment to the membrane leading to desensitization and internalization of the receptor. Required for mesendodermal differentiation, blood vessels formation and heart morphogenesis during early development and for adult cardiovascular homeostasis. Acts as a motogen by promoting mesendodermal cell migration during gastrulation by binding and activating APLNR. Acts as an early embryonic regulator of cellular movement with a role in migration and development of cardiac progenitor cells. May act as a chemoattractant for the activation of angioblast migration toward the embryonic midline, i.e. the position of the future vessel formation, during vasculogenesis. Positively regulates sinus venosus (SV)-derived endothelial cells migration into the developing heart to promote coronary blood vessel sprouting. Plays a role in placental vascular development; promotes placental trophoblast invasion and spiral artery remodeling in the uterus. Involved in the regulation of maternal cardiovascular homeostasis to prevent gestational hypertension and for potent cardioprotective functions during heart failure. Mediates myocardial contractility in an ERK1/2-dependent manner. This chain is Apelin receptor early endogenous ligand, found in Homo sapiens (Human).